The following is a 114-amino-acid chain: Large ribosomal subunit protein bL20 (114 aa).

Belongs to the bacterial ribosomal protein bL20 family.

In terms of biological role, binds directly to 23S ribosomal RNA and is necessary for the in vitro assembly process of the 50S ribosomal subunit. It is not involved in the protein synthesizing functions of that subunit. In Flavobacterium psychrophilum (strain ATCC 49511 / DSM 21280 / CIP 103535 / JIP02/86), this protein is Large ribosomal subunit protein bL20.